The primary structure comprises 93 residues: UPF0358 protein lwe1048 (93 aa).

It belongs to the UPF0358 family.

This is UPF0358 protein lwe1048 from Listeria welshimeri serovar 6b (strain ATCC 35897 / DSM 20650 / CCUG 15529 / CIP 8149 / NCTC 11857 / SLCC 5334 / V8).